Here is a 145-residue protein sequence, read N- to C-terminus: D-aminoacyl-tRNA deacylase (145 aa).

The Gly-cisPro motif, important for rejection of L-amino acids signature appears at 137-138; it reads GP.

The protein belongs to the DTD family. In terms of assembly, homodimer.

The protein localises to the cytoplasm. The enzyme catalyses glycyl-tRNA(Ala) + H2O = tRNA(Ala) + glycine + H(+). It catalyses the reaction a D-aminoacyl-tRNA + H2O = a tRNA + a D-alpha-amino acid + H(+). In terms of biological role, an aminoacyl-tRNA editing enzyme that deacylates mischarged D-aminoacyl-tRNAs. Also deacylates mischarged glycyl-tRNA(Ala), protecting cells against glycine mischarging by AlaRS. Acts via tRNA-based rather than protein-based catalysis; rejects L-amino acids rather than detecting D-amino acids in the active site. By recycling D-aminoacyl-tRNA to D-amino acids and free tRNA molecules, this enzyme counteracts the toxicity associated with the formation of D-aminoacyl-tRNA entities in vivo and helps enforce protein L-homochirality. This Shewanella frigidimarina (strain NCIMB 400) protein is D-aminoacyl-tRNA deacylase.